Consider the following 346-residue polypeptide: Low-temperature-induced cysteine proteinase (346 aa).

Residues 1 to 17 (KLSKNKSDRYLPKVGDS) constitute a propeptide, activation peptide. Intrachain disulfides connect Cys-39-Cys-81, Cys-73-Cys-114, Cys-172-Cys-223, Cys-256-Cys-268, and Cys-262-Cys-283. Residue Cys-42 is part of the active site. Active-site residues include His-178 and Asn-198. Asn-215 carries an N-linked (GlcNAc...) asparagine glycan. The propeptide at 238-346 (NPPKPAPSPP…FGNGGKKSSS (109 aa)) is removed in mature form.

Belongs to the peptidase C1 family.

This chain is Low-temperature-induced cysteine proteinase, found in Solanum lycopersicum (Tomato).